We begin with the raw amino-acid sequence, 482 residues long: Putative ankyrin repeat protein FPV232 (482 aa).

9 ANK repeats span residues 36-65 (IPLI…NVNE), 69-100 (RYLT…DLSS), 101-128 (YEER…DGNR), 129-161 (TIDD…DTKI), 166-195 (KLKT…EVNS), 199-228 (GNNS…NTDH), 232-265 (CGTT…SVNI), 270-297 (LGFT…DPNI), and 301-332 (EKET…LRAF).

This chain is Putative ankyrin repeat protein FPV232, found in Fowlpox virus (strain NVSL) (FPV).